Here is a 353-residue protein sequence, read N- to C-terminus: 3-dehydroquinate synthase (353 aa).

NAD(+) contacts are provided by residues 60-65 (AGDMNK), 94-98 (GMITD), 118-119 (TT), Lys-131, and Lys-140. The Zn(2+) site is built by Glu-173, His-234, and His-253.

The protein belongs to the sugar phosphate cyclases superfamily. Dehydroquinate synthase family. NAD(+) serves as cofactor. The cofactor is Co(2+). Requires Zn(2+) as cofactor.

The protein localises to the cytoplasm. The enzyme catalyses 7-phospho-2-dehydro-3-deoxy-D-arabino-heptonate = 3-dehydroquinate + phosphate. It participates in metabolic intermediate biosynthesis; chorismate biosynthesis; chorismate from D-erythrose 4-phosphate and phosphoenolpyruvate: step 2/7. In terms of biological role, catalyzes the conversion of 3-deoxy-D-arabino-heptulosonate 7-phosphate (DAHP) to dehydroquinate (DHQ). The polypeptide is 3-dehydroquinate synthase (Parabacteroides distasonis (strain ATCC 8503 / DSM 20701 / CIP 104284 / JCM 5825 / NCTC 11152)).